The following is a 1113-amino-acid chain: Period circadian protein homolog 3 (1113 aa).

Positions 1 to 48 (MDPCGDPAVPGGDCPQTRGPGLQGASGQEGPLQGTCVDSSHSEHEDRN) are disordered. The short motif at 54 to 63 (LIMVVQEMKK) is the Nuclear export signal 1 element. PAS domains lie at 120–187 (LASE…PTQL) and 258–324 (YEAP…KVLK). In terms of domain architecture, PAC spans 333–376 (HSPVRFCTQNGEYVILDSSWSSFVNPWSRKVSFIIGRHKVRTSP). A Nuclear export signal 3 motif is present at residues 399–408 (LQEQIHKLLL). The span at 418–427 (GYGSLGSSGS) shows a compositional bias: low complexity. Disordered stretches follow at residues 418-451 (GYGS…GQHE), 485-530 (VAET…SSSY), 561-580 (TSSS…SQRD), 718-742 (HSRC…DTSS), and 871-906 (LVPA…PFIS). Polar residues-rich tracts occupy residues 428-441 (QEQH…SESS) and 501-530 (FSSS…SSSY). The tract at residues 551–750 (LKRKCISCTN…SSPGAHLCPH (200 aa)) is CSNK1E binding domain. Residues 566–580 (EEAKPIPEVDSSQRD) show a composition bias toward basic and acidic residues. A Nuclear localization signal motif is present at residues 719-735 (SRCAGSERQKHKRKKLP). A compositionally biased stretch (basic and acidic residues) spans 889–901 (RRVEENWEAHSEE). Ser907 carries the phosphoserine modification. The Nuclear export signal 2 motif lies at 913 to 920 (LQLNLLQE). Positions 921–1010 (EMPAPSESAD…DRQRDEALPG (90 aa)) are disordered. Residues 962–986 (ATATAQQESAAASGSSASSIYFSST) show a composition bias toward low complexity. The segment covering 993-1007 (SENRQRPQDRQRDEA) has biased composition (basic and acidic residues). A CRY binding domain region spans residues 1035–1113 (ERGREEVLKQ…LEQHPAEDTS (79 aa)).

In terms of assembly, homodimer. Component of the circadian core oscillator, which includes the CRY proteins, CLOCK or NPAS2, BMAL1 or BMAL2, CSNK1D and/or CSNK1E, TIMELESS and the PER proteins. Interacts directly with PER1, PER2, CRY1, CRY2, and TIMELESS; interaction with CRY1 and CRY2 is weak and not rhythmic. Interacts with FBXW11 and BTRC. Post-translationally, phosphorylation by CSNK1E is weak and appears to require association with PER1 and translocation to the nucleus. In terms of processing, ubiquitinated. As to expression, widely expressed. Expressed in heart, brain, lung, liver, skeletal muscle, testis, and at low level in the spleen and kidney. In brain, mainly found in the SCN, hippocampus, piriform cortex, and cerebellum. Lower level of expression in the neocortex. Expression exhibits synchronous oscillations in liver, skeletal muscle and testis.

It is found in the cytoplasm. The protein localises to the nucleus. Its function is as follows. Originally described as a core component of the circadian clock. The circadian clock, an internal time-keeping system, regulates various physiological processes through the generation of approximately 24 hour circadian rhythms in gene expression, which are translated into rhythms in metabolism and behavior. It is derived from the Latin roots 'circa' (about) and 'diem' (day) and acts as an important regulator of a wide array of physiological functions including metabolism, sleep, body temperature, blood pressure, endocrine, immune, cardiovascular, and renal function. Consists of two major components: the central clock, residing in the suprachiasmatic nucleus (SCN) of the brain, and the peripheral clocks that are present in nearly every tissue and organ system. Both the central and peripheral clocks can be reset by environmental cues, also known as Zeitgebers (German for 'timegivers'). The predominant Zeitgeber for the central clock is light, which is sensed by retina and signals directly to the SCN. The central clock entrains the peripheral clocks through neuronal and hormonal signals, body temperature and feeding-related cues, aligning all clocks with the external light/dark cycle. Circadian rhythms allow an organism to achieve temporal homeostasis with its environment at the molecular level by regulating gene expression to create a peak of protein expression once every 24 hours to control when a particular physiological process is most active with respect to the solar day. Transcription and translation of core clock components (CLOCK, NPAS2, BMAL1, BMAL2, PER1, PER2, PER3, CRY1 and CRY2) plays a critical role in rhythm generation, whereas delays imposed by post-translational modifications (PTMs) are important for determining the period (tau) of the rhythms (tau refers to the period of a rhythm and is the length, in time, of one complete cycle). A diurnal rhythm is synchronized with the day/night cycle, while the ultradian and infradian rhythms have a period shorter and longer than 24 hours, respectively. Disruptions in the circadian rhythms contribute to the pathology of cardiovascular diseases, cancer, metabolic syndromes and aging. A transcription/translation feedback loop (TTFL) forms the core of the molecular circadian clock mechanism. Transcription factors, CLOCK or NPAS2 and BMAL1 or BMAL2, form the positive limb of the feedback loop, act in the form of a heterodimer and activate the transcription of core clock genes and clock-controlled genes (involved in key metabolic processes), harboring E-box elements (5'-CACGTG-3') within their promoters. The core clock genes: PER1/2/3 and CRY1/2 which are transcriptional repressors form the negative limb of the feedback loop and interact with the CLOCK|NPAS2-BMAL1|BMAL2 heterodimer inhibiting its activity and thereby negatively regulating their own expression. This heterodimer also activates nuclear receptors NR1D1, NR1D2, RORA, RORB and RORG, which form a second feedback loop and which activate and repress BMAL1 transcription, respectively. Has a redundant role with the other PER proteins PER1 and PER2 and is not essential for the circadian rhythms maintenance. In contrast, plays an important role in sleep-wake timing and sleep homeostasis probably through the transcriptional regulation of sleep homeostasis-related genes, without influencing circadian parameters. Can bind heme. The protein is Period circadian protein homolog 3 (Per3) of Mus musculus (Mouse).